We begin with the raw amino-acid sequence, 101 residues long: Small ribosomal subunit protein uS14 (101 aa).

This sequence belongs to the universal ribosomal protein uS14 family. As to quaternary structure, part of the 30S ribosomal subunit. Contacts proteins S3 and S10.

Functionally, binds 16S rRNA, required for the assembly of 30S particles and may also be responsible for determining the conformation of the 16S rRNA at the A site. The protein is Small ribosomal subunit protein uS14 of Escherichia coli O139:H28 (strain E24377A / ETEC).